Here is a 67-residue protein sequence, read N- to C-terminus: Conotoxin TsMMSK-011 (67 aa).

The first 20 residues, 1 to 20 (MMSKLGVLLTICLLLFPLTA), serve as a signal peptide directing secretion. Residues 21–50 (VQLDGDQPADLPALRTQDIATDHSPWFDPV) constitute a propeptide that is removed on maturation. Cystine bridges form between Cys-53–Cys-65, Cys-54–Cys-61, and Cys-58–Cys-64. The residue at position 63 (Pro-63) is a 4-hydroxyproline.

It belongs to the conotoxin M superfamily. In terms of tissue distribution, expressed by the venom duct.

It is found in the secreted. The chain is Conotoxin TsMMSK-011 from Conus tessulatus (Tessellate cone).